Consider the following 59-residue polypeptide: U-limacoditoxin(3)-Dv33 (59 aa).

Residues 1–19 form the signal peptide; the sequence is MSKVILLCLIFALFACSIS.

It belongs to the limacoditoxin-3 family. The natural peptide is not amidated. The recombinant peptide is amidated. As to expression, expressed by the venom secretory cell of the spine. The spine is a cuticular structure containing a single large nucleated venom-secreting cell at its base. It is an independent unit capable of producing, storing and injecting venom. On the back of D.vulnerans caterpillars, spines are grouped together by 50 to 100 to form scoli, of which there are eight in D.vulnerans.

The protein localises to the secreted. Functionally, probable toxin. Shows a relatively potent antiparasitic activity against the major pathogenic nematode of ruminants (H.contortus, EC(50)=2.6 uM). Does not show insecticidal and antimicrobial activities. Does not induce increase in intracellular calcium in mouse DRG neurons, suggesting that it does not induce pain. The sequence is that of U-limacoditoxin(3)-Dv33 from Doratifera vulnerans (Mottled cup moth).